Reading from the N-terminus, the 211-residue chain is Probable oligoribonuclease (211 aa).

The 165-residue stretch at 38-202 (IVWMDLEMTG…DDIRESIKEL (165 aa)) folds into the Exonuclease domain. Tyr159 is an active-site residue.

Belongs to the oligoribonuclease family.

Its function is as follows. 3'-to-5' exoribonuclease specific for small oligoribonucleotides. In Drosophila melanogaster (Fruit fly), this protein is Probable oligoribonuclease.